The following is a 163-amino-acid chain: Thiol peroxidase (163 aa).

Residues 16 to 162 form the Thioredoxin domain; sequence LQVGDKALDF…FEAAIAAAKA (147 aa). Residue cysteine 58 is the Cysteine sulfenic acid (-SOH) intermediate of the active site. Cysteine 58 and cysteine 92 are disulfide-bonded.

The protein belongs to the peroxiredoxin family. Tpx subfamily. As to quaternary structure, homodimer.

It catalyses the reaction a hydroperoxide + [thioredoxin]-dithiol = an alcohol + [thioredoxin]-disulfide + H2O. Its function is as follows. Thiol-specific peroxidase that catalyzes the reduction of hydrogen peroxide and organic hydroperoxides to water and alcohols, respectively. Plays a role in cell protection against oxidative stress by detoxifying peroxides. This Streptococcus pneumoniae serotype 2 (strain D39 / NCTC 7466) protein is Thiol peroxidase.